We begin with the raw amino-acid sequence, 336 residues long: tRNA N6-adenosine threonylcarbamoyltransferase (336 aa).

Fe cation is bound by residues H114 and H118. Residues L136–G140, D169, G182, D186, and N275 each bind substrate. A Fe cation-binding site is contributed by D301.

The protein belongs to the KAE1 / TsaD family. Fe(2+) serves as cofactor.

The protein localises to the cytoplasm. It carries out the reaction L-threonylcarbamoyladenylate + adenosine(37) in tRNA = N(6)-L-threonylcarbamoyladenosine(37) in tRNA + AMP + H(+). Functionally, required for the formation of a threonylcarbamoyl group on adenosine at position 37 (t(6)A37) in tRNAs that read codons beginning with adenine. Is involved in the transfer of the threonylcarbamoyl moiety of threonylcarbamoyl-AMP (TC-AMP) to the N6 group of A37, together with TsaE and TsaB. TsaD likely plays a direct catalytic role in this reaction. This is tRNA N6-adenosine threonylcarbamoyltransferase from Streptococcus gordonii (strain Challis / ATCC 35105 / BCRC 15272 / CH1 / DL1 / V288).